Consider the following 512-residue polypeptide: Maturase K (512 aa).

Belongs to the intron maturase 2 family. MatK subfamily.

The protein localises to the plastid. The protein resides in the chloroplast. Its function is as follows. Usually encoded in the trnK tRNA gene intron. Probably assists in splicing its own and other chloroplast group II introns. In Amorphophallus abyssinicus (Black arum), this protein is Maturase K.